The sequence spans 229 residues: MARPAKPAEEPQVEALCCELGFRLPPAAVTGLTVYLNMLQKWSAVMNLVGPRTWQPMVRTLIVDSLHLDRFLRDAVPQCGPQIWDFGAGAGLPGIPLRMVWQHGEYHMVDVREKRTMFMQMVLARHPLSGTFVHRARVEDFMADRAPADMLVSRAFMPWPELLSLLEGRIRQGGHVIVLANEPAPDHDRPDAAHGRPLPSGWDLTAQYVYEVEGSARYFWALSSKKAPS.

Residues G87, L92, 138–139, and R154 each bind S-adenosyl-L-methionine; that span reads VE.

It belongs to the methyltransferase superfamily. RNA methyltransferase RsmG family.

The protein localises to the cytoplasm. It catalyses the reaction guanosine(527) in 16S rRNA + S-adenosyl-L-methionine = N(7)-methylguanosine(527) in 16S rRNA + S-adenosyl-L-homocysteine. Specifically methylates the N7 position of guanine in position 527 of 16S rRNA. The polypeptide is Ribosomal RNA small subunit methyltransferase G (Oleidesulfovibrio alaskensis (strain ATCC BAA-1058 / DSM 17464 / G20) (Desulfovibrio alaskensis)).